An 809-amino-acid polypeptide reads, in one-letter code: MVMAHFVENFWGEKNNGFDVLYHNMKHGQISTKELADFVRERATIEEAYSRSMTKLAKSASNYSQLGTFAPMWDVFKTSTEKLANCHLDLVRKLQELIKEVQKYGEEQVKSHKKTKEEVAGTLEAVQAIQNITQALQKSKENYTAKCVEQERLKKEGATQREIEKAAVKSKKATDTYKLYVEKYALTKADFEQKMTETAQKFQDIEETHLIHIKEIIGSLSNAVKEIHLQIGQVHEEFINNMANTTIESLIQKFAESKGTGKERPGLIEFEECDPASAVEGIKPRKRKTFALPGIIKKEKDAESVECPDADSLNIPDVDEEGFSIKPEANQNDTKENHFYSSSDSDSEDEEPKRYRIEIKPAHPNNLHHTMASLDELKVSIGNITLSPAVSRHSPVQMNRNSSNEELTKSKPSSLPTEKGTNDLLAWDPLFGSSLESSSAPLTSSSSARPTTPLSLGTLVPPPRPASRPKLASGKLSGINEIPRPFSPPVTSNTSPPPTAPLARAESSSSISSSASLSAANTPTVGVSRGPSPVSLGNQDTLPVAIALTESVNAYFKGADPTKCIVKITGDVTISFPSGIIKVFTSNPSPAVLCFRVKNISRLEQILPNSQLVFSDPSQCDSNTKDFWMNMQAVTIYLKKLSEQNPAASYYNVDVLKYQVSSNGIQSTPLNLATYWKCSASTTDLRVDYKYNPEAMVAPSVLSNIQVVVPVDGGVTNMQSLPPAIWNAEQMKAFWKLSGISEKSDSGGSGSLRAKFDLSEGPSKPTTLAVQFLSEGNTLSGVDIELVGTGYRLSLVKKRFATGRYLADC.

The region spanning 3–250 (MAHFVENFWG…NMANTTIESL (248 aa)) is the F-BAR domain. Residues 3–274 (MAHFVENFWG…PGLIEFEECD (272 aa)) form a mediates dimerization and binding to membranes enriched in Pi(4,5)-P2 and induces their tubulation region. Residues 87 to 156 (HLDLVRKLQE…CVEQERLKKE (70 aa)) are a coiled coil. Lys-297 participates in a covalent cross-link: Glycyl lysine isopeptide (Lys-Gly) (interchain with G-Cter in SUMO2). The tract at residues 301-352 (DAESVECPDADSLNIPDVDEEGFSIKPEANQNDTKENHFYSSSDSDSEDEEP) is disordered. Position 312 is a phosphoserine (Ser-312). Thr-385 bears the Phosphothreonine mark. Ser-387, Ser-394, Ser-402, and Ser-403 each carry phosphoserine. Polar residues predominate over residues 390 to 416 (VSRHSPVQMNRNSSNEELTKSKPSSLP). Disordered stretches follow at residues 390–422 (VSRH…KGTN) and 435–536 (LESS…PVSL). A compositionally biased stretch (low complexity) spans 435-456 (LESSSAPLTSSSSARPTTPLSL). Phosphoserine is present on residues Ser-487, Ser-492, Ser-495, Ser-507, Ser-509, Ser-510, and Ser-532. Residues 501–520 (PLARAESSSSISSSASLSAA) show a composition bias toward low complexity. The mediates interaction with DAB2, EPS15, EPS15R and ITSN1 stretch occupies residues 520-809 (ANTPTVGVSR…FATGRYLADC (290 aa)). The 268-residue stretch at 541 to 808 (TLPVAIALTE…RFATGRYLAD (268 aa)) folds into the MHD domain.

The protein belongs to the FCHO family. Homodimer; disulfide-linked. May form homotetramer. Interacts with AP2A1. Interacts with EPS15, EPS15R, ITSN1 and ITSN2; recruit those scaffolding proteins which in turn may interact with the adaptor protein complex AP-2 at the plasma membrane. Interacts with DAB2 (via DPF motifs); mediates LDL receptor/LDLR endocytosis. Post-translationally, ubiquitinated. Mainly undergoes monoubiquitination but also polyubiquitination. As to expression, ubiquitously expressed (at protein level).

The protein localises to the membrane. It is found in the clathrin-coated pit. Functions in an early step of clathrin-mediated endocytosis. Has both a membrane binding/bending activity and the ability to recruit proteins essential to the formation of functional clathrin-coated pits. Has a lipid-binding activity with a preference for membranes enriched in phosphatidylserine and phosphoinositides (Pi(4,5) biphosphate) like the plasma membrane. Its membrane-bending activity might be important for the subsequent action of clathrin and adaptors in the formation of clathrin-coated vesicles. Involved in adaptor protein complex AP-2-dependent endocytosis of the transferrin receptor, it also functions in the AP-2-independent endocytosis of the LDL receptor. The sequence is that of F-BAR domain only protein 2 (Fcho2) from Mus musculus (Mouse).